The following is a 106-amino-acid chain: Iron-sulfur cluster assembly protein CyaY (106 aa).

The protein belongs to the frataxin family.

Involved in iron-sulfur (Fe-S) cluster assembly. May act as a regulator of Fe-S biogenesis. The polypeptide is Iron-sulfur cluster assembly protein CyaY (Klebsiella pneumoniae subsp. pneumoniae (strain ATCC 700721 / MGH 78578)).